Consider the following 201-residue polypeptide: Peptidyl-tRNA hydrolase (201 aa).

Tyrosine 17 contacts tRNA. Histidine 22 acts as the Proton acceptor in catalysis. Residues tyrosine 68, asparagine 70, and asparagine 116 each coordinate tRNA.

Belongs to the PTH family. In terms of assembly, monomer.

The protein resides in the cytoplasm. The catalysed reaction is an N-acyl-L-alpha-aminoacyl-tRNA + H2O = an N-acyl-L-amino acid + a tRNA + H(+). In terms of biological role, hydrolyzes ribosome-free peptidyl-tRNAs (with 1 or more amino acids incorporated), which drop off the ribosome during protein synthesis, or as a result of ribosome stalling. Catalyzes the release of premature peptidyl moieties from peptidyl-tRNA molecules trapped in stalled 50S ribosomal subunits, and thus maintains levels of free tRNAs and 50S ribosomes. This chain is Peptidyl-tRNA hydrolase, found in Lawsonia intracellularis (strain PHE/MN1-00).